The chain runs to 318 residues: MPSITVRRLYQENQQKLNLTWVAGTGGSDNVIGNDDQRPTLALVGHLNFIHPNRVQVLGLAEVDYLNKLEQSAAKTALDQLFHKSMSVVMVANGQPVPRLLRDYCHSHNVPLMCSTLESPYLMDVLRIYLARALAVSTVLHGVFLDVFEIGVLIMGDSAMGKSELALELISRGHGMVADDAVELYRIGPDTLEGRCPPLLRDFLEVRGLGILNIRTIFGETAVRPKKVLKLIIHLVKANDQAMQALDRLNIQSETQDIIGVTVRKVVLPVAAGRNLAVLVEAAVRNYILQLRGIDSTREFIERHTNFLRDQENAPDID.

Active-site residues include His-141 and Lys-162. 156–163 provides a ligand contact to ATP; the sequence is GDSAMGKS. Residue Ser-163 participates in Mg(2+) binding. Catalysis depends on Asp-180, which acts as the Proton acceptor; for phosphorylation activity. Proton donor; for dephosphorylation activity. The tract at residues 204-213 is important for the catalytic mechanism of both phosphorylation and dephosphorylation; sequence LEVRGLGILN. Mg(2+) is bound at residue Glu-205. Arg-248 is a catalytic residue. The segment at 269-274 is important for the catalytic mechanism of dephosphorylation; it reads PVAAGR.

The protein belongs to the HPrK/P family. Homohexamer. The cofactor is Mg(2+).

It catalyses the reaction [HPr protein]-L-serine + ATP = [HPr protein]-O-phospho-L-serine + ADP + H(+). The enzyme catalyses [HPr protein]-O-phospho-L-serine + phosphate + H(+) = [HPr protein]-L-serine + diphosphate. Its function is as follows. Catalyzes the ATP- as well as the pyrophosphate-dependent phosphorylation of a specific serine residue in HPr, a phosphocarrier protein of the phosphoenolpyruvate-dependent sugar phosphotransferase system (PTS). HprK/P also catalyzes the pyrophosphate-producing, inorganic phosphate-dependent dephosphorylation (phosphorolysis) of seryl-phosphorylated HPr (P-Ser-HPr). The chain is HPr kinase/phosphorylase from Chromobacterium violaceum (strain ATCC 12472 / DSM 30191 / JCM 1249 / CCUG 213 / NBRC 12614 / NCIMB 9131 / NCTC 9757 / MK).